We begin with the raw amino-acid sequence, 364 residues long: D-alanine--D-alanine ligase A (364 aa).

The ATP-grasp domain occupies 145–348 (KRLLRDAGLN…YTDLITRLIE (204 aa)). 175 to 230 (ESKLGLPLFVKPANQGSSVGVSKVTSEEQYAIAVDLAFEFDHKVIVEQGIKGREIE) contacts ATP. The Mg(2+) site is built by Asp302, Glu315, and Asn317.

This sequence belongs to the D-alanine--D-alanine ligase family. The cofactor is Mg(2+). Mn(2+) is required as a cofactor.

Its subcellular location is the cytoplasm. The enzyme catalyses 2 D-alanine + ATP = D-alanyl-D-alanine + ADP + phosphate + H(+). It functions in the pathway cell wall biogenesis; peptidoglycan biosynthesis. In terms of biological role, cell wall formation. The chain is D-alanine--D-alanine ligase A (ddlA) from Escherichia coli O157:H7.